Here is a 388-residue protein sequence, read N- to C-terminus: Chorismate synthase (388 aa).

NADP(+) contacts are provided by arginine 39 and arginine 45. FMN is bound by residues 130-132 (RSS), 251-252 (NA), glycine 296, 311-315 (KPIPT), and arginine 337.

This sequence belongs to the chorismate synthase family. In terms of assembly, homotetramer. FMNH2 is required as a cofactor.

The catalysed reaction is 5-O-(1-carboxyvinyl)-3-phosphoshikimate = chorismate + phosphate. It participates in metabolic intermediate biosynthesis; chorismate biosynthesis; chorismate from D-erythrose 4-phosphate and phosphoenolpyruvate: step 7/7. Catalyzes the anti-1,4-elimination of the C-3 phosphate and the C-6 proR hydrogen from 5-enolpyruvylshikimate-3-phosphate (EPSP) to yield chorismate, which is the branch point compound that serves as the starting substrate for the three terminal pathways of aromatic amino acid biosynthesis. This reaction introduces a second double bond into the aromatic ring system. The polypeptide is Chorismate synthase (Streptococcus pyogenes serotype M6 (strain ATCC BAA-946 / MGAS10394)).